The chain runs to 906 residues: Rho GTPase-activating protein gacJ (906 aa).

The disordered stretch occupies residues 53-117; the sequence is LEGHLNPSSH…RDNSRSDNIR (65 aa). Residues 69-79 are compositionally biased toward low complexity; the sequence is NNNNNNNNNNN. Positions 92-117 are enriched in basic and acidic residues; sequence SRSDSKHHNRENSKSDRDNSRSDNIR. Positions 161–348 constitute a Rho-GAP domain; it reads EELQSLYPDQ…YMLEYFNDIF (188 aa). 3 disordered regions span residues 368–415, 452–864, and 877–906; these read DTTS…SRSK, EIIP…SVLT, and ANQA…NINK. Polar residues predominate over residues 381 to 404; that stretch reads NGGSPRTSNTPYQQQHQLSSQSMA. The segment covering 461 to 487 has biased composition (low complexity); sequence TTTTTTTTTNTTTTTTTTNTTPNNTTT. 2 stretches are compositionally biased toward pro residues: residues 494–510 and 547–560; these read PVPP…PPNP and QPPP…PSPP. Polar residues predominate over residues 565 to 574; the sequence is KPTSKSDFIP. 2 stretches are compositionally biased toward low complexity: residues 575 to 597 and 613 to 629; these read STNN…SIPK and IEEP…TTTT. Over residues 637 to 649 the composition is skewed to polar residues; that stretch reads FKNNGTISSGSKS. Low complexity-rich tracts occupy residues 650 to 663 and 683 to 694; these read NPNL…NQPL and SKPITTTPTIKK. Over residues 708 to 721 the composition is skewed to pro residues; the sequence is PPSPSSSSPSPPHN. Composition is skewed to low complexity over residues 754 to 772, 785 to 816, and 844 to 861; these read PTIP…PTTP, PPIN…STPK, and SSPT…SSPS. Positions 880-890 are enriched in polar residues; it reads AKKNPLSNSGG.

It is found in the cytoplasm. Rho GTPase-activating protein involved in the signal transduction pathway. The polypeptide is Rho GTPase-activating protein gacJ (gacJ) (Dictyostelium discoideum (Social amoeba)).